The following is a 388-amino-acid chain: Succinate--CoA ligase [ADP-forming] subunit beta (388 aa).

Residues 9–245 (KELLASYGLP…KSQENERELK (237 aa)) enclose the ATP-grasp domain. Residues Lys-46, 53–55 (GRG), Glu-100, Tyr-103, and Glu-108 each bind ATP. Asn-200 and Asp-214 together coordinate Mg(2+). Substrate contacts are provided by residues Asn-265 and 322 to 324 (GIV).

This sequence belongs to the succinate/malate CoA ligase beta subunit family. As to quaternary structure, heterotetramer of two alpha and two beta subunits. The cofactor is Mg(2+).

It carries out the reaction succinate + ATP + CoA = succinyl-CoA + ADP + phosphate. The enzyme catalyses GTP + succinate + CoA = succinyl-CoA + GDP + phosphate. It functions in the pathway carbohydrate metabolism; tricarboxylic acid cycle; succinate from succinyl-CoA (ligase route): step 1/1. Succinyl-CoA synthetase functions in the citric acid cycle (TCA), coupling the hydrolysis of succinyl-CoA to the synthesis of either ATP or GTP and thus represents the only step of substrate-level phosphorylation in the TCA. The beta subunit provides nucleotide specificity of the enzyme and binds the substrate succinate, while the binding sites for coenzyme A and phosphate are found in the alpha subunit. This Neisseria gonorrhoeae (strain ATCC 700825 / FA 1090) protein is Succinate--CoA ligase [ADP-forming] subunit beta.